The chain runs to 726 residues: Catalase-peroxidase (726 aa).

Residues 1–13 (MSMSEETNNSLSS) are compositionally biased toward polar residues. The disordered stretch occupies residues 1–34 (MSMSEETNNSLSSGKCPFHHGGSDQSAGEGTGSR). Positions 105 to 226 (WHGAGTYRSV…LAATEMGLIY (122 aa)) form a cross-link, tryptophyl-tyrosyl-methioninium (Trp-Tyr) (with M-252). His-106 acts as the Proton acceptor in catalysis. A cross-link (tryptophyl-tyrosyl-methioninium (Tyr-Met) (with W-105)) is located at residues 226-252 (YVNPEGPNASGEPLSAAAAIRATFGNM). Heme b is bound at residue His-267.

The protein belongs to the peroxidase family. Peroxidase/catalase subfamily. In terms of assembly, homodimer or homotetramer. Heme b serves as cofactor. Formation of the three residue Trp-Tyr-Met cross-link is important for the catalase, but not the peroxidase activity of the enzyme.

It catalyses the reaction H2O2 + AH2 = A + 2 H2O. It carries out the reaction 2 H2O2 = O2 + 2 H2O. In terms of biological role, bifunctional enzyme with both catalase and broad-spectrum peroxidase activity. The chain is Catalase-peroxidase from Enterobacter sp. (strain 638).